The primary structure comprises 430 residues: Meiotically up-regulated gene 132 protein (430 aa).

The protein belongs to the UPF0300 family.

The protein resides in the mitochondrion. Its function is as follows. Has a role in meiosis. This Schizosaccharomyces pombe (strain 972 / ATCC 24843) (Fission yeast) protein is Meiotically up-regulated gene 132 protein (mug132).